The primary structure comprises 201 residues: Acyl-homoserine-lactone synthase (201 aa).

The protein belongs to the autoinducer synthase family.

It catalyses the reaction a fatty acyl-[ACP] + S-adenosyl-L-methionine = an N-acyl-L-homoserine lactone + S-methyl-5'-thioadenosine + holo-[ACP] + H(+). Functionally, required for the synthesis of PAI consisting of 3-oxo-N-(tetrahydro-2-oxo-3-furanyl)-dodecanamide also known as N-(3-oxododecanoyl)homoserine lactone, an autoinducer molecule which binds to LasR and thus acts in elastase biosynthesis regulation. In Pseudomonas aeruginosa (strain ATCC 15692 / DSM 22644 / CIP 104116 / JCM 14847 / LMG 12228 / 1C / PRS 101 / PAO1), this protein is Acyl-homoserine-lactone synthase (lasI).